Reading from the N-terminus, the 147-residue chain is Calmodulin (147 aa).

4 consecutive EF-hand domains span residues 8-43, 44-79, 81-116, and 120-147; these read EQIAEFKEAFALFDKDNSGSISASELATVMRSLGLS, PSEAEVADLMNEIDVDGNHAIEFSEFLALMSRQLKC, DSEQELLEAFKVFDKNGDGLISAAELKHVLTSIGEK, and AEVDEMLREVSDGSGEINIKQFAALLSK. Ca(2+) is bound by residues D21, D23, S25, S27, E32, D57, D59, N61, E68, D94, N96, D98, and E105.

The protein belongs to the calmodulin family.

Its function is as follows. Calmodulin mediates the control of a large number of enzymes, ion channels and other proteins by Ca(2+). Among the enzymes to be stimulated by the calmodulin-Ca(2+) complex are a number of protein kinases and phosphatases. This chain is Calmodulin (CMD1), found in Kluyveromyces lactis (strain ATCC 8585 / CBS 2359 / DSM 70799 / NBRC 1267 / NRRL Y-1140 / WM37) (Yeast).